Reading from the N-terminus, the 399-residue chain is Phosphoglycerate kinase (399 aa).

Residues 24–26 (DLN), Arg-41, 64–67 (HLGR), Arg-123, and Arg-160 each bind substrate. ATP-binding positions include Lys-210, Gly-298, Glu-329, and 355 to 358 (GGDS).

The protein belongs to the phosphoglycerate kinase family. Monomer.

The protein resides in the cytoplasm. The enzyme catalyses (2R)-3-phosphoglycerate + ATP = (2R)-3-phospho-glyceroyl phosphate + ADP. The protein operates within carbohydrate degradation; glycolysis; pyruvate from D-glyceraldehyde 3-phosphate: step 2/5. The chain is Phosphoglycerate kinase from Salinispora tropica (strain ATCC BAA-916 / DSM 44818 / JCM 13857 / NBRC 105044 / CNB-440).